We begin with the raw amino-acid sequence, 557 residues long: Formate--tetrahydrofolate ligase 1 (557 aa).

Residue 66 to 73 (TPAGEGKT) coordinates ATP.

The protein belongs to the formate--tetrahydrofolate ligase family.

The catalysed reaction is (6S)-5,6,7,8-tetrahydrofolate + formate + ATP = (6R)-10-formyltetrahydrofolate + ADP + phosphate. The protein operates within one-carbon metabolism; tetrahydrofolate interconversion. This chain is Formate--tetrahydrofolate ligase 1, found in Streptococcus sanguinis (strain SK36).